The primary structure comprises 1017 residues: GPI ethanolamine phosphate transferase 3 (1017 aa).

A helical membrane pass occupies residues Phe34 to Thr54. 5 N-linked (GlcNAc...) asparagine glycosylation sites follow: Asn66, Asn71, Asn100, Asn182, and Asn203. A helical transmembrane segment spans residues Val347–Ile367. N-linked (GlcNAc...) asparagine glycosylation occurs at Asn411. The next 6 helical transmembrane spans lie at Leu457 to Val477, Phe484 to Tyr504, Phe515 to Phe535, Ile558 to Trp578, Ile582 to Pro602, and Leu644 to Ile664. N-linked (GlcNAc...) asparagine glycosylation is found at Asn681 and Asn682. Residues Trp685–Tyr705 traverse the membrane as a helical segment. N-linked (GlcNAc...) asparagine glycosylation is present at Asn707. The helical transmembrane segment at Ala715–Trp735 threads the bilayer. The N-linked (GlcNAc...) asparagine glycan is linked to Asn742. 6 helical membrane-spanning segments follow: residues Ile765–Ile785, Asn806–Phe826, Pro829–Ile849, Ile903–Leu923, Gly947–Phe967, and Phe981–Ala1001.

Belongs to the PIGG/PIGN/PIGO family. PIGO subfamily. Glycosylated.

Its subcellular location is the endoplasmic reticulum membrane. It functions in the pathway glycolipid biosynthesis; glycosylphosphatidylinositol-anchor biosynthesis. Involved in glycosylphosphatidylinositol-anchor biosynthesis. Transfers ethanolamine phosphate to the GPI third mannose which links the GPI-anchor to the C-terminus of the proteins by an amide bond. Involved in cell wall biosynthesis. This is GPI ethanolamine phosphate transferase 3 (GPI13) from Saccharomyces cerevisiae (strain ATCC 204508 / S288c) (Baker's yeast).